Here is a 500-residue protein sequence, read N- to C-terminus: Zinc finger protein ENHYDROUS (500 aa).

A disordered region spans residues 1–42 (MPVDLDNSSTVSGDASVSSTGNQNLTPKSVGKKKRNLPGMPD). A compositionally biased stretch (low complexity) spans 8–21 (SSTVSGDASVSSTG). Ser-51 carries the post-translational modification Phosphoserine. 2 consecutive C2H2-type zinc fingers follow at residues 61-83 (FVCEICNKGFQRDQNLQLHRRGH) and 102-132 (YVCPVSGCVHHDPSRALGDLTGIKKHFCRKH). Positions 124–131 (IKKHFCRK) match the Nuclear localization signal motif. The segment at 137 to 160 (WKCEKCSKKYAVQSDWKAHSKICG) adopts a C2H2-type 2; degenerate zinc-finger fold. Residues Cys-139, Cys-142, His-155, Cys-159, Cys-166, Cys-168, His-181, and Cys-185 each contribute to the Zn(2+) site. Residues 164 to 187 (YKCDCGTLFSRRDSFITHRAFCDA) form a CCHC-type 2; atypical zinc finger. The interval 174–186 (RRDSFITHRAFCD) is SHR-binding. Positions 196–236 (HTQSKKLYPETVTRKNPEIEQKSPAAVESSPSLPPSSPPSV) are disordered. Basic and acidic residues predominate over residues 207–216 (VTRKNPEIEQ).

As to quaternary structure, interacts with the DELLA proteins (e.g. GAI/RGA2, RGA, RGL1, RGL2 and RGLG3), acting as coactivators. In terms of tissue distribution, at 3 days post anthesis (DPA), expressed in the chalazal endosperm region. By 6 DPA, expressed in the endosperm and embryo. In fully germinated seed, strongest expression in the root tip and not detected in the cotyledons. In 4-days old seedlings, restricted to the vasculature of the cotyledons, the shoot apical meristem region, and the root tip. By 8 days, restricted to newly emerged leaves.

Its subcellular location is the nucleus. In terms of biological role, transcription factor promoting the transition to germination by regulating light and hormonal signaling during seed maturation. Acts as a positive regulator of phytochrome and/or gibberellin action. The polypeptide is Zinc finger protein ENHYDROUS (Arabidopsis thaliana (Mouse-ear cress)).